We begin with the raw amino-acid sequence, 326 residues long: Small ribosomal subunit biogenesis GTPase RsgA (326 aa).

Residues 80 to 241 (LSHQMHIIAS…IIDTPGIKGF (162 aa)) enclose the CP-type G domain. GTP-binding positions include 129-132 (NKID) and 183-191 (GHSGVGKST). Zn(2+) is bound by residues Cys-265, Cys-270, His-272, and Cys-278.

It belongs to the TRAFAC class YlqF/YawG GTPase family. RsgA subfamily. In terms of assembly, monomer. Associates with 30S ribosomal subunit, binds 16S rRNA. It depends on Zn(2+) as a cofactor.

The protein localises to the cytoplasm. One of several proteins that assist in the late maturation steps of the functional core of the 30S ribosomal subunit. Helps release RbfA from mature subunits. May play a role in the assembly of ribosomal proteins into the subunit. Circularly permuted GTPase that catalyzes slow GTP hydrolysis, GTPase activity is stimulated by the 30S ribosomal subunit. The sequence is that of Small ribosomal subunit biogenesis GTPase RsgA from Flavobacterium psychrophilum (strain ATCC 49511 / DSM 21280 / CIP 103535 / JIP02/86).